A 1487-amino-acid polypeptide reads, in one-letter code: Chromosome partition protein MukB (1487 aa).

Glycine 34–serine 41 is a binding site for ATP. 5 coiled-coil regions span residues serine 297–alanine 426, alanine 460–serine 666, arginine 781–alanine 806, glutamate 836–valine 1111, and valine 1210–isoleucine 1266. The tract at residues proline 667–arginine 784 is flexible hinge.

This sequence belongs to the SMC family. MukB subfamily. As to quaternary structure, homodimerization via its hinge domain. Binds to DNA via its C-terminal region. Interacts, and probably forms a ternary complex, with MukE and MukF via its C-terminal region. The complex formation is stimulated by calcium or magnesium. Interacts with tubulin-related protein FtsZ.

Its subcellular location is the cytoplasm. It localises to the nucleoid. Plays a central role in chromosome condensation, segregation and cell cycle progression. Functions as a homodimer, which is essential for chromosome partition. Involved in negative DNA supercoiling in vivo, and by this means organize and compact chromosomes. May achieve or facilitate chromosome segregation by condensation DNA from both sides of a centrally located replisome during cell division. The protein is Chromosome partition protein MukB of Vibrio vulnificus (strain YJ016).